Here is a 267-residue protein sequence, read N- to C-terminus: 4-hydroxy-tetrahydrodipicolinate reductase (267 aa).

NAD(+) is bound by residues 8–13 and Asp34; that span reads GAAGRM. Arg35 serves as a coordination point for NADP(+). Residues 98–100 and 122–125 contribute to the NAD(+) site; these read GTT and AANF. Catalysis depends on His155, which acts as the Proton donor/acceptor. Residue His156 coordinates (S)-2,3,4,5-tetrahydrodipicolinate. Lys159 functions as the Proton donor in the catalytic mechanism. 165-166 contacts (S)-2,3,4,5-tetrahydrodipicolinate; sequence GT.

This sequence belongs to the DapB family.

The protein resides in the cytoplasm. It carries out the reaction (S)-2,3,4,5-tetrahydrodipicolinate + NAD(+) + H2O = (2S,4S)-4-hydroxy-2,3,4,5-tetrahydrodipicolinate + NADH + H(+). The catalysed reaction is (S)-2,3,4,5-tetrahydrodipicolinate + NADP(+) + H2O = (2S,4S)-4-hydroxy-2,3,4,5-tetrahydrodipicolinate + NADPH + H(+). Its pathway is amino-acid biosynthesis; L-lysine biosynthesis via DAP pathway; (S)-tetrahydrodipicolinate from L-aspartate: step 4/4. Catalyzes the conversion of 4-hydroxy-tetrahydrodipicolinate (HTPA) to tetrahydrodipicolinate. The protein is 4-hydroxy-tetrahydrodipicolinate reductase of Pseudomonas putida (strain GB-1).